The primary structure comprises 267 residues: 4-hydroxy-tetrahydrodipicolinate reductase (267 aa).

Residues Gly8–Met13 and Asp34 each bind NAD(+). NADP(+) is bound at residue Arg35. Residues Gly98–Thr100 and Ala122–Phe125 contribute to the NAD(+) site. Catalysis depends on His155, which acts as the Proton donor/acceptor. His156 lines the (S)-2,3,4,5-tetrahydrodipicolinate pocket. Residue Lys159 is the Proton donor of the active site. (S)-2,3,4,5-tetrahydrodipicolinate is bound at residue Gly165–Thr166.

It belongs to the DapB family.

The protein localises to the cytoplasm. The enzyme catalyses (S)-2,3,4,5-tetrahydrodipicolinate + NAD(+) + H2O = (2S,4S)-4-hydroxy-2,3,4,5-tetrahydrodipicolinate + NADH + H(+). The catalysed reaction is (S)-2,3,4,5-tetrahydrodipicolinate + NADP(+) + H2O = (2S,4S)-4-hydroxy-2,3,4,5-tetrahydrodipicolinate + NADPH + H(+). It participates in amino-acid biosynthesis; L-lysine biosynthesis via DAP pathway; (S)-tetrahydrodipicolinate from L-aspartate: step 4/4. In terms of biological role, catalyzes the conversion of 4-hydroxy-tetrahydrodipicolinate (HTPA) to tetrahydrodipicolinate. The protein is 4-hydroxy-tetrahydrodipicolinate reductase of Pseudomonas putida (strain ATCC 700007 / DSM 6899 / JCM 31910 / BCRC 17059 / LMG 24140 / F1).